Reading from the N-terminus, the 484-residue chain is Cysteine--tRNA ligase (484 aa).

Residue C29 participates in Zn(2+) binding. The 'HIGH' region signature appears at 31–41 (ATVQGMPHVGH). Zn(2+) is bound by residues C227, H252, and E256. Positions 283–287 (KMSKS) match the 'KMSKS' region motif. An ATP-binding site is contributed by K286.

Belongs to the class-I aminoacyl-tRNA synthetase family. In terms of assembly, monomer. Zn(2+) is required as a cofactor.

Its subcellular location is the cytoplasm. The enzyme catalyses tRNA(Cys) + L-cysteine + ATP = L-cysteinyl-tRNA(Cys) + AMP + diphosphate. The sequence is that of Cysteine--tRNA ligase from Paenarthrobacter aurescens (strain TC1).